A 91-amino-acid chain; its full sequence is Probable Fe(2+)-trafficking protein (91 aa).

It belongs to the Fe(2+)-trafficking protein family.

Could be a mediator in iron transactions between iron acquisition and iron-requiring processes, such as synthesis and/or repair of Fe-S clusters in biosynthetic enzymes. The polypeptide is Probable Fe(2+)-trafficking protein (Burkholderia mallei (strain NCTC 10247)).